The chain runs to 197 residues: Putative protein N5-glutamine methyltransferase MJ0928 (197 aa).

S-adenosyl-L-methionine is bound by residues 42 to 46 (GVGTG), Asp-64, and Asn-105. A substrate-binding site is contributed by 105-108 (NPPY).

It belongs to the eukaryotic/archaeal PrmC-related family.

It catalyses the reaction L-glutaminyl-[protein] + S-adenosyl-L-methionine = N(5)-methyl-L-glutaminyl-[protein] + S-adenosyl-L-homocysteine + H(+). In terms of biological role, putative protein methyltransferase using S-adenosyl-L-methionine as the methyl donor. May methylate a Gln residue in target proteins. The sequence is that of Putative protein N5-glutamine methyltransferase MJ0928 from Methanocaldococcus jannaschii (strain ATCC 43067 / DSM 2661 / JAL-1 / JCM 10045 / NBRC 100440) (Methanococcus jannaschii).